Reading from the N-terminus, the 1077-residue chain is MTAELQQDDAAGAADGHGSSCQMLLNQLREITGIQDPSFLHEALKASNGDITQAVSLLTDERVKEPSQDTVATEPSEVEGSAANKEVLAKVIDLTHDNKDDLQAAIALSLLESPKIQADGRDLNRMHEATSAETKRSKRKRCEVWGENPNPNDWRRVDGWPVGLKNVGNTCWFSAVIQSLFQLPEFRRLVLSYSLPQNVLENCRSHTEKRNIMFMQELQYLFALMMGSNRKFVDPSAALDLLKGAFRSSEEQQQDVSEFTHKLLDWLEDAFQLAVNVNSPRNKSENPMVQLFYGTFLTEGVREGKPFCNNETFGQYPLQVNGYRNLDECLEGAMVEGDVELLPSDHSVKYGQERWFTKLPPVLTFELSRFEFNQSLGQPEKIHNKLEFPQIIYMDRYMYRSKELIRNKRECIRKLKEEIKILQQKLERYVKYGSGPARFPLPDMLKYVIEFASTKPASESCPPESDTHMTLPLSSVHCSVSDQTSKESTSTESSSQDVESTFSSPEDSLPKSKPLTSSRSSMEMPSQPAPRTVTDEEINFVKTCLQRWRSEIEQDIQDLKTCIASTTQTIEQMYCDPLLRQVPYRLHAVLVHEGQANAGHYWAYIYNQPRQSWLKYNDISVTESSWEEVERDSYGGLRNVSAYCLMYINDKLPYFNAEAAPTESDQMSEVEALSVELKHYIQEDNWRFEQEVEEWEEEQSCKIPQMESSTNSSSQDYSTSQEPSVASSHGVRCLSSEHAVIVKEQTAQAIANTARAYEKSGVEAALSEVMLSPAMQGVILAIAKARQTFDRDGSEAGLIKAFHEEYSRLYQLAKETPTSHSDPRLQHVLVYFFQNEAPKRVVERTLLEQFADKNLSYDERSISIMKVAQAKLKEIGPDDMNMEEYKKWHEDYSLFRKVSVYLLTGLELYQKGKYQEALSYLVYAYQSNAALLMKGPRRGVKESVIALYRRKCLLELNAKAASLFETNDDHSVTEGINVMNELIIPCIHLIINNDISKDDLDAIEVMRNHWCSYLGQDIAENLQLCLGEFLPRLLDPSAEIIVLKEPPTIRPNSPYDLCSRFAAVMESIQGVSTVTVK.

Residues 60–80 form a disordered region; sequence DERVKEPSQDTVATEPSEVEG. Ser-67 is subject to Phosphoserine. Positions 97-116 constitute a UIM domain; it reads DNKDDLQAAIALSLLESPKI. A Glycyl lysine isopeptide (Lys-Gly) (interchain with G-Cter in SUMO2) cross-link involves residue Lys-99. Residues 162 to 650 enclose the USP domain; sequence VGLKNVGNTC…SAYCLMYIND (489 aa). Cys-171 acts as the Nucleophile in catalysis. The residue at position 375 (Ser-375) is a Phosphoserine. The segment at 477–535 is disordered; that stretch reads HCSVSDQTSKESTSTESSSQDVESTFSSPEDSLPKSKPLTSSRSSMEMPSQPAPRTVTD. The span at 481-501 shows a compositional bias: low complexity; sequence SDQTSKESTSTESSSQDVEST. Positions 514–524 are enriched in polar residues; the sequence is PLTSSRSSMEM. At Ser-550 the chain carries Phosphoserine. The Proton acceptor role is filled by His-600. Residues 697–728 form a disordered region; sequence EEQSCKIPQMESSTNSSSQDYSTSQEPSVASS. Low complexity predominate over residues 707-724; that stretch reads ESSTNSSSQDYSTSQEPS. Ser-714 is subject to Phosphoserine. Residue Lys-759 forms a Glycyl lysine isopeptide (Lys-Gly) (interchain with G-Cter in SUMO2) linkage. The residue at position 1048 (Thr-1048) is a Phosphothreonine.

It belongs to the peptidase C19 family. USP28 subfamily. Interacts with ZNF304. Interacts with PRKD1. Interacts with TP53BP1. Interacts with isoform 1 of FBXW7; following DNA damage, dissociates from FBXW7 leading to degradation of MYC. Post-translationally, degraded upon nickel ion level or hypoxia exposure. Phosphorylated upon DNA damage at Ser-67 and Ser-714, by ATM or ATR. Phosphorylated by PRKD1.

The protein localises to the nucleus. The protein resides in the nucleoplasm. The enzyme catalyses Thiol-dependent hydrolysis of ester, thioester, amide, peptide and isopeptide bonds formed by the C-terminal Gly of ubiquitin (a 76-residue protein attached to proteins as an intracellular targeting signal).. Functionally, deubiquitinase involved in DNA damage response checkpoint and MYC proto-oncogene stability. Involved in DNA damage induced apoptosis by specifically deubiquitinating proteins of the DNA damage pathway such as CLSPN. Also involved in G2 DNA damage checkpoint, by deubiquitinating CLSPN, and preventing its degradation by the anaphase promoting complex/cyclosome (APC/C). In contrast, it does not deubiquitinate PLK1. Specifically deubiquitinates MYC in the nucleoplasm, leading to prevent MYC degradation by the proteasome: acts by specifically interacting with isoform 1 of FBXW7 (FBW7alpha) in the nucleoplasm and counteracting ubiquitination of MYC by the SCF(FBW7) complex. In contrast, it does not interact with isoform 4 of FBXW7 (FBW7gamma) in the nucleolus, allowing MYC degradation and explaining the selective MYC degradation in the nucleolus. Deubiquitinates ZNF304, hence preventing ZNF304 degradation by the proteasome and leading to the activated KRAS-mediated promoter hypermethylation and transcriptional silencing of tumor suppressor genes (TSGs) in a subset of colorectal cancers (CRC) cells. The protein is Ubiquitin carboxyl-terminal hydrolase 28 (USP28) of Homo sapiens (Human).